Consider the following 498-residue polypeptide: Glycerol kinase (498 aa).

Position 12 (Thr-12) interacts with ADP. ATP-binding residues include Thr-12, Thr-13, and Ser-14. Thr-12 provides a ligand contact to sn-glycerol 3-phosphate. Residue Arg-16 participates in ADP binding. Sn-glycerol 3-phosphate-binding residues include Arg-82, Glu-83, and Tyr-134. Glycerol contacts are provided by Arg-82, Glu-83, and Tyr-134. At His-230 the chain carries Phosphohistidine; by HPr. Asp-244 is a sn-glycerol 3-phosphate binding site. The glycerol site is built by Asp-244 and Gln-245. The ADP site is built by Thr-266 and Gly-309. Positions 266, 309, 313, and 410 each coordinate ATP. The ADP site is built by Gly-410 and Asn-414.

Belongs to the FGGY kinase family. In terms of assembly, homotetramer and homodimer (in equilibrium). In terms of processing, the phosphoenolpyruvate-dependent sugar phosphotransferase system (PTS), including enzyme I, and histidine-containing protein (HPr) are required for the phosphorylation, which leads to the activation of the enzyme.

The enzyme catalyses glycerol + ATP = sn-glycerol 3-phosphate + ADP + H(+). It participates in polyol metabolism; glycerol degradation via glycerol kinase pathway; sn-glycerol 3-phosphate from glycerol: step 1/1. Activated by phosphorylation and inhibited by fructose 1,6-bisphosphate (FBP). Its function is as follows. Key enzyme in the regulation of glycerol uptake and metabolism. Catalyzes the phosphorylation of glycerol to yield sn-glycerol 3-phosphate. This Staphylococcus aureus (strain MW2) protein is Glycerol kinase.